Reading from the N-terminus, the 269-residue chain is Probable aquaporin TIP5-1 (269 aa).

5 helical membrane-spanning segments follow: residues 19 to 39 (AYFA…GSTI), 54 to 74 (SLMA…FIAA), 84 to 104 (AVTF…IFYW), 139 to 159 (FGAG…VHVA), and 177 to 197 (ALGA…AGSL). Positions 82–84 (NPA) match the NPA 1 motif. Residues 203–205 (NPA) carry the NPA 2 motif. The chain crosses the membrane as a helical span at residues 223–243 (YWAGPMVGAAVAALVHQALVF).

This sequence belongs to the MIP/aquaporin (TC 1.A.8) family. TIP (TC 1.A.8.10) subfamily. Expressed in leaves and anthers, and at lower levels in roots.

It localises to the vacuole membrane. In terms of biological role, aquaporins facilitate the transport of water and small neutral solutes across cell membranes. May be involved in transport from the vacuolar compartment to the cytoplasm. This Oryza sativa subsp. japonica (Rice) protein is Probable aquaporin TIP5-1 (TIP5;1).